The chain runs to 328 residues: UPF0324 membrane protein AF_1621 (328 aa).

The next 11 helical transmembrane spans lie at 21–39, 43–60, 73–95, 101–123, 130–152, 162–184, 191–213, 223–240, 245–267, 271–293, and 305–327; these read LQMLLLLLLCGAAAYIINL, ALEPLFLALVFGIVAGNL, YVPFLLPIGITLYGVNINIPYLG, IVAATLISTSLIFLTVFWLSSRL, SILLACGSGICGVSAIAIISPLI, AIMIITAVGLTGAILYPSIAHYA, FAVLAGATLHQTGIVKISSQLFG, GIRIAMIALVVLILSIIY, FYVPWYIVSFLGVALFSSTYLPG, QALRPLATVMFATTLAAICYTVN, and LFASYAGWAVGVAFVLLLLGSGA.

Belongs to the UPF0324 family.

It localises to the cell membrane. The protein is UPF0324 membrane protein AF_1621 of Archaeoglobus fulgidus (strain ATCC 49558 / DSM 4304 / JCM 9628 / NBRC 100126 / VC-16).